The sequence spans 748 residues: Cysteine--tRNA ligase, cytoplasmic (748 aa).

The disordered stretch occupies residues 1 to 25 (MAGSSGQQGKGRRVQPQWSPPAGTQ). Alanine 2 carries the N-acetylalanine modification. Serine 19 bears the Phosphoserine mark. Position 55 (cysteine 55) interacts with Zn(2+). Glycine 56 lines the L-cysteine pocket. Positions 57-67 (PTVYDASHMGH) match the 'HIGH' region motif. Threonine 96 serves as a coordination point for L-cysteine. The 'KIIK' region signature appears at 101–104 (KIIK). A phosphoserine mark is found at serine 305 and serine 307. 3 residues coordinate Zn(2+): cysteine 348, histidine 373, and glutamate 377. Residue histidine 373 participates in L-cysteine binding. The 'KMSKS' region signature appears at 406 to 410 (KMSKS). An ATP-binding site is contributed by lysine 409. Composition is skewed to basic and acidic residues over residues 654 to 679 (KRQVEEEKRKKKEEAARRKQEQEAAK) and 700 to 717 (KFDENGLPTHDAEGKELS). 2 disordered regions span residues 654–686 (KRQVEEEKRKKKEEAARRKQEQEAAKLAKMKIP) and 700–721 (KFDENGLPTHDAEGKELSKGQA). Phosphoserine is present on serine 746.

Homodimer. The cofactor is Zn(2+).

It is found in the cytoplasm. It catalyses the reaction tRNA(Cys) + L-cysteine + ATP = L-cysteinyl-tRNA(Cys) + AMP + diphosphate. Functionally, catalyzes the ATP-dependent ligation of cysteine to tRNA(Cys). The protein is Cysteine--tRNA ligase, cytoplasmic (CARS1) of Macaca fascicularis (Crab-eating macaque).